Consider the following 130-residue polypeptide: Histone H2A type 2-A (130 aa).

The disordered stretch occupies residues Met1–Ala22. Ser2 carries the N-acetylserine modification. Residue Ser2 is modified to Phosphoserine; by RPS6KA5. Arg4 bears the Citrulline; alternate mark. Arg4 bears the Symmetric dimethylarginine; by PRMT5; alternate mark. N6-(2-hydroxyisobutyryl)lysine; alternate is present on residues Lys6 and Lys10. At Lys6 the chain carries N6-(beta-hydroxybutyryl)lysine; alternate. N6-acetyllysine; alternate is present on Lys6. Positions Gln7–Ser19 are enriched in basic residues. Lys10 carries the post-translational modification N6-lactoyllysine; alternate. The residue at position 10 (Lys10) is an N6-succinyllysine; alternate. Residues Lys14 and Lys16 each participate in a glycyl lysine isopeptide (Lys-Gly) (interchain with G-Cter in ubiquitin) cross-link. At Lys37 the chain carries N6-(2-hydroxyisobutyryl)lysine; alternate. Lys37 carries the N6-(beta-hydroxybutyryl)lysine; alternate modification. Lys37 is subject to N6-crotonyllysine; alternate. N6-(2-hydroxyisobutyryl)lysine is present on residues Lys75 and Lys76. Lys96 bears the N6-(2-hydroxyisobutyryl)lysine; alternate mark. Lys96 bears the N6-succinyllysine; alternate mark. Position 96 is an N6-glutaryllysine; alternate (Lys96). N6-glutaryllysine is present on Lys100. An N5-methylglutamine modification is found at Gln105. An N6-(2-hydroxyisobutyryl)lysine; alternate modification is found at Lys119. Lys119 and Lys120 each carry N6-crotonyllysine; alternate. An N6-glutaryllysine; alternate mark is found at Lys119 and Lys120. Lys120 carries the post-translational modification N6-(beta-hydroxybutyryl)lysine; alternate. A Glycyl lysine isopeptide (Lys-Gly) (interchain with G-Cter in ubiquitin); alternate cross-link involves residue Lys120. At Thr121 the chain carries Phosphothreonine; by DCAF1. N6-(beta-hydroxybutyryl)lysine; alternate is present on Lys126. An N6-crotonyllysine; alternate modification is found at Lys126. N6-glutaryllysine; alternate is present on Lys126.

The protein belongs to the histone H2A family. In terms of assembly, the nucleosome is a histone octamer containing two molecules each of H2A, H2B, H3 and H4 assembled in one H3-H4 heterotetramer and two H2A-H2B heterodimers. The octamer wraps approximately 147 bp of DNA. In terms of processing, deiminated on Arg-4 in granulocytes upon calcium entry. Monoubiquitination of Lys-120 (H2AK119Ub) by RING1, TRIM37 and RNF2/RING2 complex gives a specific tag for epigenetic transcriptional repression and participates in X chromosome inactivation of female mammals. It is involved in the initiation of both imprinted and random X inactivation. Ubiquitinated H2A is enriched in inactive X chromosome chromatin. Ubiquitination of H2A functions downstream of methylation of 'Lys-27' of histone H3 (H3K27me). H2AK119Ub by RNF2/RING2 can also be induced by ultraviolet and may be involved in DNA repair. Following DNA double-strand breaks (DSBs), it is ubiquitinated through 'Lys-63' linkage of ubiquitin moieties by the E2 ligase UBE2N and the E3 ligases RNF8 and RNF168, leading to the recruitment of repair proteins to sites of DNA damage. Ubiquitination at Lys-14 and Lys-16 (H2AK13Ub and H2AK15Ub, respectively) in response to DNA damage is initiated by RNF168 that mediates monoubiquitination at these 2 sites, and 'Lys-63'-linked ubiquitin are then conjugated to monoubiquitin; RNF8 is able to extend 'Lys-63'-linked ubiquitin chains in vitro. H2AK119Ub and ionizing radiation-induced 'Lys-63'-linked ubiquitination (H2AK13Ub and H2AK15Ub) are distinct events. Post-translationally, phosphorylation on Ser-2 (H2AS1ph) is enhanced during mitosis. Phosphorylation on Ser-2 by RPS6KA5/MSK1 directly represses transcription. Acetylation of H3 inhibits Ser-2 phosphorylation by RPS6KA5/MSK1. Phosphorylation at Thr-121 (H2AT120ph) by DCAF1 is present in the regulatory region of many tumor suppresor genes and down-regulates their transcription. In terms of processing, symmetric dimethylation on Arg-4 by the PRDM1/PRMT5 complex may play a crucial role in the germ-cell lineage. Glutamine methylation at Gln-105 (H2AQ104me) by FBL is specifically dedicated to polymerase I. It is present at 35S ribosomal DNA locus and impairs binding of the FACT complex. Post-translationally, crotonylation (Kcr) is specifically present in male germ cells and marks testis-specific genes in post-meiotic cells, including X-linked genes that escape sex chromosome inactivation in haploid cells. Crotonylation marks active promoters and enhancers and confers resistance to transcriptional repressors. It is also associated with post-meiotically activated genes on autosomes. In terms of processing, hydroxybutyrylation of histones is induced by starvation. Lactylated in macrophages by EP300/P300 by using lactoyl-CoA directly derived from endogenous or exogenous lactate, leading to stimulates gene transcription.

The protein resides in the nucleus. The protein localises to the chromosome. In terms of biological role, core component of nucleosome. Nucleosomes wrap and compact DNA into chromatin, limiting DNA accessibility to the cellular machineries which require DNA as a template. Histones thereby play a central role in transcription regulation, DNA repair, DNA replication and chromosomal stability. DNA accessibility is regulated via a complex set of post-translational modifications of histones, also called histone code, and nucleosome remodeling. The sequence is that of Histone H2A type 2-A (Hist2h2aa1) from Mus musculus (Mouse).